Here is a 556-residue protein sequence, read N- to C-terminus: Formate--tetrahydrofolate ligase (556 aa).

65–72 contributes to the ATP binding site; the sequence is TPAGEGKS.

The protein belongs to the formate--tetrahydrofolate ligase family.

It carries out the reaction (6S)-5,6,7,8-tetrahydrofolate + formate + ATP = (6R)-10-formyltetrahydrofolate + ADP + phosphate. The protein operates within one-carbon metabolism; tetrahydrofolate interconversion. This chain is Formate--tetrahydrofolate ligase, found in Streptococcus pneumoniae serotype 4 (strain ATCC BAA-334 / TIGR4).